The following is a 618-amino-acid chain: Medium-chain acyl-CoA ligase ACSF2, mitochondrial (618 aa).

The N-terminal 44 residues, M1–F44, are a transit peptide targeting the mitochondrion. Position 182 is an N6-acetyllysine (K182). K185 carries the N6-acetyllysine; alternate modification. K185 is modified (N6-succinyllysine; alternate). T266–K274 contacts ATP. K343 and K401 each carry N6-acetyllysine. Position 481 is an N6-succinyllysine (K481). ATP is bound by residues D496 and R511. K513 carries the N6-acetyllysine modification. N6-acetyllysine; alternate occurs at positions 547 and 573. Residues K547 and K573 each carry the N6-succinyllysine; alternate modification. K602 contributes to the ATP binding site. At K602 the chain carries N6-succinyllysine.

This sequence belongs to the ATP-dependent AMP-binding enzyme family.

The protein localises to the mitochondrion. The enzyme catalyses a medium-chain fatty acid + ATP + CoA = a medium-chain fatty acyl-CoA + AMP + diphosphate. It carries out the reaction octanoate + ATP + CoA = octanoyl-CoA + AMP + diphosphate. In terms of biological role, acyl-CoA synthases catalyze the initial reaction in fatty acid metabolism, by forming a thioester with CoA. Has some preference toward medium-chain substrates. Plays a role in adipocyte differentiation. The sequence is that of Medium-chain acyl-CoA ligase ACSF2, mitochondrial from Macaca fascicularis (Crab-eating macaque).